A 419-amino-acid polypeptide reads, in one-letter code: UDP-N-acetylglucosamine 1-carboxyvinyltransferase (419 aa).

22-23 is a phosphoenolpyruvate binding site; sequence KN. R93 serves as a coordination point for UDP-N-acetyl-alpha-D-glucosamine. The Proton donor role is filled by C117. C117 carries the post-translational modification 2-(S-cysteinyl)pyruvic acid O-phosphothioketal. Positions 307 and 329 each coordinate UDP-N-acetyl-alpha-D-glucosamine.

This sequence belongs to the EPSP synthase family. MurA subfamily.

It is found in the cytoplasm. The enzyme catalyses phosphoenolpyruvate + UDP-N-acetyl-alpha-D-glucosamine = UDP-N-acetyl-3-O-(1-carboxyvinyl)-alpha-D-glucosamine + phosphate. It participates in cell wall biogenesis; peptidoglycan biosynthesis. Cell wall formation. Adds enolpyruvyl to UDP-N-acetylglucosamine. This chain is UDP-N-acetylglucosamine 1-carboxyvinyltransferase, found in Shewanella sediminis (strain HAW-EB3).